The primary structure comprises 328 residues: Carbonic anhydrase-related protein 10 (328 aa).

Residues 31 to 301 enclose the Alpha-carbonic anhydrase domain; the sequence is GWWAYKEVVQ…LNNRCIRTNI (271 aa).

Belongs to the alpha-carbonic anhydrase family.

In terms of biological role, does not have a catalytic activity. This is Carbonic anhydrase-related protein 10 (CA10) from Bos taurus (Bovine).